Consider the following 398-residue polypeptide: Phosphoglycerate kinase (398 aa).

Substrate-binding positions include 21–23 (DFN), Arg36, 59–62 (HLGR), Arg119, and Arg157. ATP contacts are provided by residues Lys208, Gly296, Glu327, and 354-357 (GGDS).

It belongs to the phosphoglycerate kinase family. In terms of assembly, monomer.

Its subcellular location is the cytoplasm. It catalyses the reaction (2R)-3-phosphoglycerate + ATP = (2R)-3-phospho-glyceroyl phosphate + ADP. It functions in the pathway carbohydrate degradation; glycolysis; pyruvate from D-glyceraldehyde 3-phosphate: step 2/5. The protein is Phosphoglycerate kinase of Streptococcus agalactiae serotype Ia (strain ATCC 27591 / A909 / CDC SS700).